A 120-amino-acid chain; its full sequence is Large ribosomal subunit protein bL19 (120 aa).

The protein belongs to the bacterial ribosomal protein bL19 family.

Functionally, this protein is located at the 30S-50S ribosomal subunit interface and may play a role in the structure and function of the aminoacyl-tRNA binding site. The chain is Large ribosomal subunit protein bL19 from Marinomonas sp. (strain MWYL1).